The sequence spans 87 residues: Small ribosomal subunit protein bS18 (87 aa).

Belongs to the bacterial ribosomal protein bS18 family. As to quaternary structure, part of the 30S ribosomal subunit. Forms a tight heterodimer with protein bS6.

Functionally, binds as a heterodimer with protein bS6 to the central domain of the 16S rRNA, where it helps stabilize the platform of the 30S subunit. This is Small ribosomal subunit protein bS18 from Campylobacter hominis (strain ATCC BAA-381 / DSM 21671 / CCUG 45161 / LMG 19568 / NCTC 13146 / CH001A).